A 138-amino-acid polypeptide reads, in one-letter code: Glutathione S-transferase Mu 5 (138 aa).

The residue at position 1 (S1) is a Phosphoserine. A GST N-terminal domain is found at S1–R71. Glutathione contacts are provided by residues Y6–W7, W39–K43, N52–L53, and Q65–S66. In terms of domain architecture, GST C-terminal spans I72–I135.

This sequence belongs to the GST superfamily. Mu family. Homodimer.

The protein resides in the cytoplasm. It catalyses the reaction RX + glutathione = an S-substituted glutathione + a halide anion + H(+). Conjugation of reduced glutathione to a wide number of exogenous and endogenous hydrophobic electrophiles. The protein is Glutathione S-transferase Mu 5 of Mesocricetus auratus (Golden hamster).